A 533-amino-acid chain; its full sequence is MLRHNFRSSIFIRIVANSWSITRSVSSAPIKAESRKQQDSLKNIDSGEAYTALGNIRQKKDVFHYTDRASGTGYSHYSNSVYQHRPYIWPPLRKMYNWNYAFVIAGMVILMSDFEWIKEQIKGASTPFRPEASQKEESTDSGTEIEVKEKPKKKKLGFRERRIIEYEDRLRLYSTPDKIFRYFATLKIIDPNDESGRIFEVFMTPEDFLRSFTPGVMQPRRWGLDSFKAYNPEKHKRHKFSDPNSIFYKLGENGLINFSDYLFLMTLLSTSHADFALAFKIFDVDGNGALDKEEFTKVQQLIMSQTTVGQRHRDHVTPNSSFRVETNSALETYFFGKDGKGSLSSEKFIEFQERLQHDILKMEFERRDAMENSDGLITEESFAQLLLLHAQIAEKKQKHMLKRVKRRFKGDQSKGVSFDETKAFFEFLYHIDDVDIALHFHKMAGMSIDAKLLKRVAVKVTGIPLSDHVVDVVITLFDDNLDGKLSHEEMVAVMRRRMRRGLERPRDTGLFRLFDAVLECGKRAYHASPLPFY.

The N-terminal 13 residues, 1-13, are a transit peptide targeting the mitochondrion; it reads MLRHNFRSSIFIR. The segment at 127 to 147 is disordered; that stretch reads PFRPEASQKEESTDSGTEIEV. 3 consecutive EF-hand domains span residues 270 to 305, 337 to 358, and 465 to 500; these read TSHADFALAFKIFDVDGNGALDKEEFTKVQQLIMSQ, KDGKGSLSSEKFIEFQERLQHD, and LSDHVVDVVITLFDDNLDGKLSHEEMVAVMRRRMRR. Ca(2+) is bound by residues D283, D285, N287, and E294.

Belongs to the MICU1 family. MICU1 subfamily.

The protein resides in the mitochondrion intermembrane space. The protein localises to the mitochondrion inner membrane. Its function is as follows. Calcium sensor of the mitochondrial calcium uniporter (mcu-1) channel, which senses calcium level via its EF-hand domains. At low calcium levels, micu-1 occludes the pore of the mcu-1 channel, preventing mitochondrial calcium uptake. At higher calcium levels, calcium-binding to micu-1 induces a conformational change that weakens mcu-1-micu-1 interactions and moves micu-1 away from the pore, allowing calcium permeation through the mcu-1 channel. Also required to protect against manganese toxicity by preventing manganese uptake by mcu-1. Modulates the activity of the mitochondrial calcium uniporter protein mcu-1 depending on the level of intracellular calcium in PLM touch receptor neurons following axonal injury. The polypeptide is Calcium uptake protein 1 homolog, mitochondrial (Caenorhabditis briggsae).